We begin with the raw amino-acid sequence, 255 residues long: MQIDAVTLFPEMFDSIARFGVSQRALDLGLWQFKAWNPRDFTHDNYRRVDDRPYGGGPGMVMQIEPLEQALDAARARQREAGVEASHVVYLSPQGARLTHAKAAELSQRPGLILLCGRYEGIDERLIATQVDEEISIGDYVLSGGELPAMVLADAVVRLLPGALNDAQSAYEDSFVDGLLDCPHYTRPEEYRGMRVPDVLLSGNHALIAKWRLKQSLGRTWQRRPELLQDRVLTKQESRLLAEYQQEQDIRKKPE.

S-adenosyl-L-methionine-binding positions include Gly117 and 137–142 (IGDYVL).

This sequence belongs to the RNA methyltransferase TrmD family. Homodimer.

It is found in the cytoplasm. It catalyses the reaction guanosine(37) in tRNA + S-adenosyl-L-methionine = N(1)-methylguanosine(37) in tRNA + S-adenosyl-L-homocysteine + H(+). Its function is as follows. Specifically methylates guanosine-37 in various tRNAs. This is tRNA (guanine-N(1)-)-methyltransferase from Chromobacterium violaceum (strain ATCC 12472 / DSM 30191 / JCM 1249 / CCUG 213 / NBRC 12614 / NCIMB 9131 / NCTC 9757 / MK).